The sequence spans 1265 residues: Protein FAM193A (1265 aa).

A coiled-coil region spans residues 107-142; it reads SEDTYSTLLQRYQRSEEELRRVAEEWLECQKRIDAY. A disordered region spans residues 247 to 272; that stretch reads APDYLAERSPPSVSSASSGSGSSSPI. Residues 255-271 show a composition bias toward low complexity; the sequence is SPPSVSSASSGSGSSSP. At S293 the chain carries Phosphoserine. Disordered regions lie at residues 331–407, 553–586, 626–674, 750–785, 822–841, 859–881, and 893–1163; these read NGGG…EQAP, GSEI…SKEK, VQSS…APLP, ENGV…NQKE, LTKR…ERES, ETKP…KLEE, and EHLH…DRVN. A compositionally biased stretch (acidic residues) spans 355-365; the sequence is EADDEEADGES. A Phosphoserine modification is found at S383. Residue S642 is modified to Phosphoserine. The span at 757–769 shows a compositional bias: acidic residues; that stretch reads QQDDGDESADEDS. Residues 772 to 781 are compositionally biased toward low complexity; the sequence is EHSSSTSTST. A compositionally biased stretch (basic residues) spans 868–877; the sequence is AAKRARHKQR. The stretch at 873 to 932 forms a coiled coil; it reads RHKQRKLEEKARLEAEARAREHLHLQEEQRRREEEEDEEEEEDRFKEEFQRLQELQKLRA. Composition is skewed to basic and acidic residues over residues 893 to 905 and 915 to 929; these read EHLH…RRRE and DRFK…ELQK. Over residues 931 to 940 the composition is skewed to basic residues; the sequence is RAVKKKKKER. The span at 953-973 shows a compositional bias: polar residues; it reads RNFQAATESVPNSGNIHNGSL. The stretch at 1093-1118 forms a coiled coil; the sequence is TEQKREERKVNSNNNNKKQLNHIKDE. Phosphoserine is present on residues S1129 and S1144. Positions 1149-1159 are enriched in basic residues; the sequence is GKNKKNKKKKG.

The protein belongs to the FAM193 family.

The chain is Protein FAM193A (FAM193A) from Homo sapiens (Human).